Consider the following 153-residue polypeptide: MSSQTERTFIAVKPDGVQRGLVSQILSRFEKKGYKLVAIKLVKADDKLLEQHYAEHVGKPFFPKMVSFMKSGPILATVWEGKDVVRQGRTILGATNPLGSAPGTIRGDFGIDLGRNVCHGSDSVDSAEREINLWFKKEELVDWESNQAKWIYE.

Residues K13, F61, R89, T95, R106, and N116 each contribute to the ATP site. Residue T95 is modified to Phosphothreonine. Catalysis depends on H119, which acts as the Pros-phosphohistidine intermediate.

Belongs to the NDK family. As to quaternary structure, homohexamer and homotetramer. Interacts with TOM40 preferentially in an unfolded, unphosphorylated form. Requires Mg(2+) as cofactor. In terms of processing, the N-terminus is blocked.

Its subcellular location is the cytoplasm. It is found in the mitochondrion intermembrane space. The catalysed reaction is a 2'-deoxyribonucleoside 5'-diphosphate + ATP = a 2'-deoxyribonucleoside 5'-triphosphate + ADP. It catalyses the reaction a ribonucleoside 5'-diphosphate + ATP = a ribonucleoside 5'-triphosphate + ADP. Functionally, major role in the synthesis of nucleoside triphosphates other than ATP. The ATP gamma phosphate is transferred to the NDP beta phosphate via a ping-pong mechanism, using a phosphorylated active-site intermediate. Required for repair of UV radiation- and etoposide-induced DNA damage. The chain is Nucleoside diphosphate kinase (YNK1) from Saccharomyces cerevisiae (strain ATCC 204508 / S288c) (Baker's yeast).